The following is a 292-amino-acid chain: Protease HtpX homolog (292 aa).

Transmembrane regions (helical) follow at residues 4–24 and 42–62; these read IFLF…TLRL and ALLV…LAMS. His147 provides a ligand contact to Zn(2+). Glu148 is a catalytic residue. His151 provides a ligand contact to Zn(2+). 2 consecutive transmembrane segments (helical) span residues 158–178 and 198–218; these read VTLA…SRII and FVTS…IVMW. Position 224 (Glu224) interacts with Zn(2+).

It belongs to the peptidase M48B family. It depends on Zn(2+) as a cofactor.

It is found in the cell inner membrane. The chain is Protease HtpX homolog from Nitrosomonas eutropha (strain DSM 101675 / C91 / Nm57).